The chain runs to 592 residues: Bifunctional enzyme BirA/CoaX (592 aa).

A biotin--protein ligase region spans residues 1–329 (MTVLKLSHWR…ISLRSDDRPV (329 aa)). Positions 83–259 (QTALKHECAS…ELDAVLLQYA (177 aa)) constitute a BPL/LPL catalytic domain. A type III pantothenate kinase region spans residues 336–592 (DSERFLLLDG…AAEGREYEHI (257 aa)). 344-351 (DGGNSRLK) is an ATP binding site. Residues Y426 and 433–436 (GSDR) each bind substrate. The active-site Proton acceptor is the D435. An ATP-binding site is contributed by T458. Residue T508 coordinates substrate.

In the N-terminal section; belongs to the biotin--protein ligase family. It in the C-terminal section; belongs to the type III pantothenate kinase family. The cofactor is NH4(+). It depends on K(+) as a cofactor.

It localises to the cytoplasm. It catalyses the reaction biotin + L-lysyl-[protein] + ATP = N(6)-biotinyl-L-lysyl-[protein] + AMP + diphosphate + H(+). It carries out the reaction (R)-pantothenate + ATP = (R)-4'-phosphopantothenate + ADP + H(+). The protein operates within cofactor biosynthesis; coenzyme A biosynthesis; CoA from (R)-pantothenate: step 1/5. Functionally, activates biotin to form biotinyl-5'-adenylate and transfers the biotin moiety to biotin-accepting proteins. In terms of biological role, catalyzes the phosphorylation of pantothenate (Pan), the first step in CoA biosynthesis. In Neisseria meningitidis serogroup B (strain ATCC BAA-335 / MC58), this protein is Bifunctional enzyme BirA/CoaX (birA/coaX).